The sequence spans 354 residues: MRRLLFCTLLMTGLTQLCCRTQGSAPQDSTPGGRPGAALEVYQRTEVCRWPCRCPPQRPTCPPGVSLVRDGCGCCKVCAKQPGDTCNEAEICDPHKGLYCDYSGDTPRYETGVCAYLVAVGCEFNRVYYQNGQVFQPHPLFSCLCVSGAIGCTPLFIPKLAGSNCSAAKGRRKTDPPNCGRGTLQQQNSASYKTMSAYRNLPLTWRKKCLVQATKWTPCSRTCGMGISNRVTNDNANCEMRKERRLCYIQPCSRNTSQAVKIPRGETCQPTFQLPKAEKFVFSGCSSTQSYRPTFCGICLDKRCCVPNKSKMITVRFDCPSEGSFKWQMLWVTSCVCQRDCREPGDIFSELRIL.

An N-terminal signal peptide occupies residues 1–23 (MRRLLFCTLLMTGLTQLCCRTQG). The IGFBP N-terminal domain maps to 44-117 (RTEVCRWPCR…RYETGVCAYL (74 aa)). Cystine bridges form between Cys48-Cys72, Cys52-Cys74, Cys54-Cys75, Cys61-Cys78, Cys86-Cys100, Cys92-Cys114, Cys209-Cys238, Cys219-Cys223, Cys247-Cys252, Cys268-Cys305, Cys285-Cys319, Cys296-Cys335, and Cys299-Cys337. In terms of domain architecture, TSP type-1 spans 208-253 (KCLVQATKWTPCSRTCGMGISNRVTNDNANCEMRKERRLCYIQPCS). A CTCK domain is found at 268-342 (CQPTFQLPKA…TSCVCQRDCR (75 aa)). Asn308 carries N-linked (GlcNAc...) asparagine glycosylation.

The protein belongs to the CCN family.

It localises to the secreted. The protein resides in the mitochondrion. Plays a role in mitochondrial electron transport and mitochondrial respiration. The protein is Cellular communication network factor 6 of Mus musculus (Mouse).